The sequence spans 108 residues: ATP synthase peripheral stalk subunit F6, mitochondrial (108 aa).

The transit peptide at 1 to 32 (MVLQRIFRLSSVLRSAVSVHLKRNIGVTAVAF) directs the protein to the mitochondrion. Residues Lys41, Lys46, and Lys79 each carry the N6-acetyllysine modification. Residues Lys84, Lys94, and Lys99 each carry the N6-acetyllysine; alternate modification. 3 positions are modified to N6-succinyllysine; alternate: Lys84, Lys94, and Lys99. Residue Lys105 is modified to N6-acetyllysine. Position 108 is a phosphoserine (Ser108).

Belongs to the eukaryotic ATPase subunit F6 family. In terms of assembly, component of the ATP synthase complex composed at least of ATP5F1A/subunit alpha, ATP5F1B/subunit beta, ATP5MC1/subunit c (homooctomer), MT-ATP6/subunit a, MT-ATP8/subunit 8, ATP5ME/subunit e, ATP5MF/subunit f, ATP5MG/subunit g, ATP5MK/subunit k, ATP5MJ/subunit j, ATP5F1C/subunit gamma, ATP5F1D/subunit delta, ATP5F1E/subunit epsilon, ATP5PF/subunit F6, ATP5PB/subunit b, ATP5PD/subunit d, ATP5PO/subunit OSCP. ATP synthase complex consists of a soluble F(1) head domain (subunits alpha(3) and beta(3)) - the catalytic core - and a membrane F(0) domain - the membrane proton channel (subunits c, a, 8, e, f, g, k and j). These two domains are linked by a central stalk (subunits gamma, delta, and epsilon) rotating inside the F1 region and a stationary peripheral stalk (subunits F6, b, d, and OSCP).

It is found in the mitochondrion. The protein resides in the mitochondrion inner membrane. Functionally, subunit F6, of the mitochondrial membrane ATP synthase complex (F(1)F(0) ATP synthase or Complex V) that produces ATP from ADP in the presence of a proton gradient across the membrane which is generated by electron transport complexes of the respiratory chain. ATP synthase complex consist of a soluble F(1) head domain - the catalytic core - and a membrane F(1) domain - the membrane proton channel. These two domains are linked by a central stalk rotating inside the F(1) region and a stationary peripheral stalk. During catalysis, ATP synthesis in the catalytic domain of F(1) is coupled via a rotary mechanism of the central stalk subunits to proton translocation. In vivo, can only synthesize ATP although its ATP hydrolase activity can be activated artificially in vitro. Part of the complex F(0) domain. Part of the complex F(0) domain and the peripheric stalk, which acts as a stator to hold the catalytic alpha(3)beta(3) subcomplex and subunit a/ATP6 static relative to the rotary elements. This is ATP synthase peripheral stalk subunit F6, mitochondrial from Mus musculus (Mouse).